Reading from the N-terminus, the 162-residue chain is Large ribosomal subunit protein uL30 (162 aa).

Belongs to the universal ribosomal protein uL30 family. Part of the 50S ribosomal subunit.

This Korarchaeum cryptofilum (strain OPF8) protein is Large ribosomal subunit protein uL30.